The sequence spans 82 residues: MKAGIHPDYRTVVFHDTSADVYYRTGSTIKTDRTIELEGTHYPYVIIEVSSASHPYYTGKQKEYSKEGSTARFHQRFGNFFK.

It belongs to the bacterial ribosomal protein bL31 family. Type B subfamily. As to quaternary structure, part of the 50S ribosomal subunit.

This Pectobacterium atrosepticum (strain SCRI 1043 / ATCC BAA-672) (Erwinia carotovora subsp. atroseptica) protein is Large ribosomal subunit protein bL31B.